A 200-amino-acid chain; its full sequence is MNDFTLNAELRSDLGKGASRRLRRLAALVPAVVYGGDKAPESISMLAKEVAKLLENEAAYSHVIELNVGGTKQNVIIKALQRHPAKGHVMHADFVRVVAGQKLTAIVPVHFINEAAPVKKGGEISHVVAEIEVSCLPKDLPEFIEVDLANAEIGTIVHLSDIKAPKGVEFVALAHGDDKAVANVHAPRVAPEATEEGAAE.

This sequence belongs to the bacterial ribosomal protein bL25 family. CTC subfamily. As to quaternary structure, part of the 50S ribosomal subunit; part of the 5S rRNA/L5/L18/L25 subcomplex. Contacts the 5S rRNA. Binds to the 5S rRNA independently of L5 and L18.

Functionally, this is one of the proteins that binds to the 5S RNA in the ribosome where it forms part of the central protuberance. This chain is Large ribosomal subunit protein bL25, found in Pseudomonas fluorescens (strain Pf0-1).